A 484-amino-acid polypeptide reads, in one-letter code: Glutamyl-tRNA(Gln) amidotransferase subunit A (484 aa).

Residues Lys-77 and Ser-152 each act as charge relay system in the active site. The Acyl-ester intermediate role is filled by Ser-176.

Belongs to the amidase family. GatA subfamily. In terms of assembly, heterotrimer of A, B and C subunits.

It carries out the reaction L-glutamyl-tRNA(Gln) + L-glutamine + ATP + H2O = L-glutaminyl-tRNA(Gln) + L-glutamate + ADP + phosphate + H(+). In terms of biological role, allows the formation of correctly charged Gln-tRNA(Gln) through the transamidation of misacylated Glu-tRNA(Gln) in organisms which lack glutaminyl-tRNA synthetase. The reaction takes place in the presence of glutamine and ATP through an activated gamma-phospho-Glu-tRNA(Gln). This is Glutamyl-tRNA(Gln) amidotransferase subunit A from Lacticaseibacillus casei (strain BL23) (Lactobacillus casei).